The following is a 679-amino-acid chain: Dihydroxyacetone phosphate acyltransferase (679 aa).

Phosphoserine is present on Ser11. The HXXXXD motif signature appears at 161-166 (HRSYID). Lys642 carries the N6-acetyllysine modification.

This sequence belongs to the GPAT/DAPAT family. As to quaternary structure, part of a heterotrimeric complex composed of GNPAT, AGPS and a modified form of GNPAT.

Its subcellular location is the peroxisome membrane. The catalysed reaction is dihydroxyacetone phosphate + an acyl-CoA = a 1-acylglycerone 3-phosphate + CoA. It catalyses the reaction dihydroxyacetone phosphate + hexadecanoyl-CoA = 1-hexadecanoylglycerone 3-phosphate + CoA. It participates in membrane lipid metabolism; glycerophospholipid metabolism. In terms of biological role, dihydroxyacetonephosphate acyltransferase catalyzing the first step in the biosynthesis of plasmalogens, a subset of phospholipids that differ from other glycerolipids by having an alkyl chain attached through a vinyl ether linkage at the sn-1 position of the glycerol backbone, and which unique physical properties have an impact on various aspects of cell signaling and membrane biology. This is Dihydroxyacetone phosphate acyltransferase from Oryctolagus cuniculus (Rabbit).